The sequence spans 278 residues: 4-deoxy-L-threo-5-hexosulose-uronate ketol-isomerase (278 aa).

Positions 196, 198, 203, and 245 each coordinate Zn(2+).

The protein belongs to the KduI family. The cofactor is Zn(2+).

It catalyses the reaction 5-dehydro-4-deoxy-D-glucuronate = 3-deoxy-D-glycero-2,5-hexodiulosonate. The protein operates within glycan metabolism; pectin degradation; 2-dehydro-3-deoxy-D-gluconate from pectin: step 4/5. Functionally, catalyzes the isomerization of 5-dehydro-4-deoxy-D-glucuronate to 3-deoxy-D-glycero-2,5-hexodiulosonate. The chain is 4-deoxy-L-threo-5-hexosulose-uronate ketol-isomerase from Yersinia pseudotuberculosis serotype O:1b (strain IP 31758).